The sequence spans 176 residues: MIRTKNIFLIGPVGAGKSTIGKQLAKQLKLEFIDSDDTIEKKCGVDINWIFDLEGEEGFRKRERDVIAEILAEKQNIVLATGGGAILDPDTRSLLSSRGKVVYLEATIEQQLERTAKDTKRPLLRVDDKKPVLEQLMAEREPLYRSIADVVVETNGATVKNIVNKISTFLVEETIL.

14 to 19 (GAGKST) lines the ATP pocket. Mg(2+) is bound at residue S18. 3 residues coordinate substrate: D36, R60, and G83. R121 serves as a coordination point for ATP. R140 contributes to the substrate binding site.

Belongs to the shikimate kinase family. As to quaternary structure, monomer. Mg(2+) is required as a cofactor.

It is found in the cytoplasm. The catalysed reaction is shikimate + ATP = 3-phosphoshikimate + ADP + H(+). It functions in the pathway metabolic intermediate biosynthesis; chorismate biosynthesis; chorismate from D-erythrose 4-phosphate and phosphoenolpyruvate: step 5/7. Functionally, catalyzes the specific phosphorylation of the 3-hydroxyl group of shikimic acid using ATP as a cosubstrate. The chain is Shikimate kinase from Francisella philomiragia subsp. philomiragia (strain ATCC 25017 / CCUG 19701 / FSC 153 / O#319-036).